The chain runs to 308 residues: Elongation factor Ts (308 aa).

The segment at 80-83 (TDFV) is involved in Mg(2+) ion dislocation from EF-Tu.

The protein belongs to the EF-Ts family.

The protein localises to the cytoplasm. Its function is as follows. Associates with the EF-Tu.GDP complex and induces the exchange of GDP to GTP. It remains bound to the aminoacyl-tRNA.EF-Tu.GTP complex up to the GTP hydrolysis stage on the ribosome. This Sphingopyxis alaskensis (strain DSM 13593 / LMG 18877 / RB2256) (Sphingomonas alaskensis) protein is Elongation factor Ts.